Reading from the N-terminus, the 330-residue chain is MSVEADGRKLLRVEVKNSQTPIENKPHWIKTRATMGPEYRDMRRRMIDGDLHTVCQEAGCPNIFECWEDREATFLIGGDHCTRRCDFCQIESAKPEGYDKDEPRRVAESVKQMGLRYATVTSVCRDDLEDEGAWLCAETIRQIHQVTPGVGVEMLAQDFSGKQDLLDIVFEARPEVFGHNLETVPRIFKRIRPGFRYDRSLAVLDSAHEAGLITKSNLILGMGETREEISQAMRALHDANTDLLTITQYLRPNSYLHPIDRWVTPQEFDELAEEAREIGFVGVMSGPLVRSSYRAGRLYRQAMEARGERPVMIVTGYRDGAKPAPFAAKE.

The [4Fe-4S] cluster site is built by C55, C60, C66, C81, C85, C88, and S292. The region spanning 67–281 (WEDREATFLI…AEEAREIGFV (215 aa)) is the Radical SAM core domain.

This sequence belongs to the radical SAM superfamily. Lipoyl synthase family. [4Fe-4S] cluster serves as cofactor.

The protein localises to the cytoplasm. The enzyme catalyses [[Fe-S] cluster scaffold protein carrying a second [4Fe-4S](2+) cluster] + N(6)-octanoyl-L-lysyl-[protein] + 2 oxidized [2Fe-2S]-[ferredoxin] + 2 S-adenosyl-L-methionine + 4 H(+) = [[Fe-S] cluster scaffold protein] + N(6)-[(R)-dihydrolipoyl]-L-lysyl-[protein] + 4 Fe(3+) + 2 hydrogen sulfide + 2 5'-deoxyadenosine + 2 L-methionine + 2 reduced [2Fe-2S]-[ferredoxin]. Its pathway is protein modification; protein lipoylation via endogenous pathway; protein N(6)-(lipoyl)lysine from octanoyl-[acyl-carrier-protein]: step 2/2. In terms of biological role, catalyzes the radical-mediated insertion of two sulfur atoms into the C-6 and C-8 positions of the octanoyl moiety bound to the lipoyl domains of lipoate-dependent enzymes, thereby converting the octanoylated domains into lipoylated derivatives. This chain is Lipoyl synthase, found in Cutibacterium acnes (strain DSM 16379 / KPA171202) (Propionibacterium acnes).